Reading from the N-terminus, the 506-residue chain is Exoglucanase (506 aa).

Residues 1 to 18 form the signal peptide; that stretch reads MFPRSILLALSLTAVALG. The catalytic stretch occupies residues 19–450; it reads QQVGTNMAEN…IKFGDINSTF (432 aa). E227 (nucleophile) is an active-site residue. Residue E232 is the Proton donor of the active site. Residue N308 is glycosylated (N-linked (GlcNAc...) asparagine). The disordered stretch occupies residues 405-426; that stretch reads ASPSQPGISRGTCSRDSGKPED. The span at 406-419 shows a compositional bias: polar residues; sequence SPSQPGISRGTCSR. An N-linked (GlcNAc...) asparagine glycan is attached at N447. The disordered stretch occupies residues 449–472; the sequence is TFNNNGGGGGNPSPTTTRPNSPAQ. The tract at residues 451-473 is linker; sequence NNNGGGGGNPSPTTTRPNSPAQT. The segment covering 460-470 has biased composition (low complexity); sequence PSPTTTRPNSP. The region spanning 470–506 is the CBM1 domain; it reads PAQTMWGQCGGQGWTGPTACQSPSTCHVINDFYSQCF. Cystine bridges form between C478-C495 and C489-C505.

Belongs to the glycosyl hydrolase 7 (cellulase C) family.

The enzyme catalyses Hydrolysis of (1-&gt;4)-beta-D-glucosidic linkages in cellulose and cellotetraose, releasing cellobiose from the non-reducing ends of the chains.. In terms of biological role, the biological conversion of cellulose to glucose generally requires three types of hydrolytic enzymes: (1) Endoglucanases which cut internal beta-1,4-glucosidic bonds; (2) Exocellobiohydrolases that cut the disaccharide cellobiose from the non-reducing end of the cellulose polymer chain; (3) Beta-1,4-glucosidases which hydrolyze the cellobiose and other short cello-oligosaccharides to glucose. In Agaricus bisporus (White button mushroom), this protein is Exoglucanase (cel2).